The sequence spans 1846 residues: C2 domain-containing protein (1846 aa).

The disordered stretch occupies residues 16–36 (NTEKEEGKNAEINENNDPNTQ). Positions 17 to 26 (TEKEEGKNAE) are enriched in basic and acidic residues. Positions 27–36 (INENNDPNTQ) are enriched in polar residues. In terms of domain architecture, C2 spans 497 to 623 (VPRYRQRGDI…FNEKNVRRNK (127 aa)). 2 stretches are compositionally biased toward basic and acidic residues: residues 1193-1211 (DEHTDIDTEKKKHEKDNYK) and 1230-1243 (KDDHHHITDKKVSK). 5 disordered regions span residues 1193–1244 (DEHT…VSKS), 1346–1370 (KYTINEKRDDIKTKKKRSKEKKKQD), 1456–1635 (KNER…KKRV), 1652–1692 (NEKM…NNER), and 1827–1846 (EEPSSKKSPQKKKIVIVRKN). Positions 1349-1506 (INEKRDDIKT…DENMKEEQKM (158 aa)) form a coiled coil. 4 stretches are compositionally biased toward basic and acidic residues: residues 1456–1474 (KNERNKMEKSYKRMIQKDK), 1481–1629 (ESRD…MRRE), 1652–1663 (NEKMKKKEEKEE), and 1670–1692 (KEDIEDKYKIGKEASLDENNNER). Over residues 1834–1846 (SPQKKKIVIVRKN) the composition is skewed to basic residues.

The protein resides in the membrane. Functionally, binds calcium and phospholipids. Regulates microneme secretion. The chain is C2 domain-containing protein from Plasmodium falciparum (isolate 3D7).